The sequence spans 48 residues: LPDTFDSRKQWPNCPTISEIRDQGSVSVEVSAEDLLSCCGFECGMGCN.

Belongs to the peptidase C1 family. In terms of assembly, dimer of a heavy chain and a light chain cross-linked by a disulfide bond.

Its subcellular location is the lysosome. The catalysed reaction is Hydrolysis of proteins with broad specificity for peptide bonds. Preferentially cleaves -Arg-Arg-|-Xaa bonds in small molecule substrates (thus differing from cathepsin L). In addition to being an endopeptidase, shows peptidyl-dipeptidase activity, liberating C-terminal dipeptides.. Its function is as follows. Thiol protease which is believed to participate in intracellular degradation and turnover of proteins. Has also been implicated in tumor invasion and metastasis. The protein is Cathepsin B (CTSB) of Coturnix japonica (Japanese quail).